Consider the following 539-residue polypeptide: Carboxypeptidase Y homolog A (539 aa).

The signal sequence occupies residues 1–17 (MKALTATLLVGTALAAV). The propeptide occupies 18-122 (PPQQPIQVPT…KLEKYDLRVK (105 aa)). Intrachain disulfides connect C176–C416, C310–C324, C334–C357, C341–C350, and C379–C386. N207 is a glycosylation site (N-linked (GlcNAc...) asparagine). The active site involves S263. D455 is a catalytic residue. N-linked (GlcNAc...) asparagine glycosylation occurs at N506. H517 is a catalytic residue.

The protein belongs to the peptidase S10 family.

It localises to the vacuole. It catalyses the reaction Release of a C-terminal amino acid with broad specificity.. In terms of biological role, vacuolar carboxypeptidase involved in degradation of small peptides. Digests preferentially peptides containing an aliphatic or hydrophobic residue in P1' position, as well as methionine, leucine or phenylalanine in P1 position of ester substrate. The polypeptide is Carboxypeptidase Y homolog A (cpyA) (Coccidioides posadasii (strain C735) (Valley fever fungus)).